The following is a 518-amino-acid chain: Serine--tRNA ligase, mitochondrial (518 aa).

The transit peptide at 1 to 34 (MAASMARLWWPFLARQGLRSRGRCVCSQNPRRSF) directs the protein to the mitochondrion. Lys-110 bears the N6-acetyllysine mark. Residue Lys-195 is modified to N6-succinyllysine. An L-serine-binding site is contributed by 299–301 (TAE). 330 to 332 (RAE) contacts ATP. Lys-337 is modified (N6-succinyllysine). Val-345 serves as a coordination point for ATP. Glu-352 contacts L-serine. 418–421 (EVTS) contacts ATP. Position 453 (Thr-453) interacts with L-serine. Positions 497–518 (PLQYIGPNQPQKPRLPGQSATR) are disordered.

It belongs to the class-II aminoacyl-tRNA synthetase family. Type-1 seryl-tRNA synthetase subfamily. In terms of assembly, homodimer. The tRNA molecule probably binds across the dimer. Ubiquitous.

It localises to the mitochondrion matrix. It catalyses the reaction tRNA(Ser) + L-serine + ATP = L-seryl-tRNA(Ser) + AMP + diphosphate + H(+). The catalysed reaction is tRNA(Sec) + L-serine + ATP = L-seryl-tRNA(Sec) + AMP + diphosphate + H(+). The protein operates within aminoacyl-tRNA biosynthesis; selenocysteinyl-tRNA(Sec) biosynthesis; L-seryl-tRNA(Sec) from L-serine and tRNA(Sec): step 1/1. Catalyzes the attachment of serine to tRNA(Ser). Is also probably able to aminoacylate tRNA(Sec) with serine, to form the misacylated tRNA L-seryl-tRNA(Sec), which will be further converted into selenocysteinyl-tRNA(Sec). This chain is Serine--tRNA ligase, mitochondrial (Sars2), found in Mus musculus (Mouse).